The chain runs to 326 residues: dTDP-4-dehydro-6-deoxy-D-allose reductase (326 aa).

NADP(+)-binding positions include 15–21 and 129–132; these read GALGFIG and MSSS. The active-site Proton donor/acceptor is tyrosine 160. NADP(+) is bound by residues lysine 164 and 187-190; that span reads PGNV.

This sequence belongs to the NAD(P)-dependent epimerase/dehydratase family.

The catalysed reaction is dTDP-6-deoxy-alpha-D-allose + NAD(+) = dTDP-4-dehydro-6-deoxy-alpha-D-allose + NADH + H(+). It catalyses the reaction dTDP-6-deoxy-alpha-D-allose + NADP(+) = dTDP-4-dehydro-6-deoxy-alpha-D-allose + NADPH + H(+). Functionally, catalyzes the stereospecific reduction of the C-4 keto group of dTDP-4-dehydro-6-deoxy-D-allose, leading to dTDP-6-deoxy-D-allose, an intermediate in the biosynthesis of the mycinose moiety of the chalcomycin antibiotic. This is dTDP-4-dehydro-6-deoxy-D-allose reductase (chmD) from Streptomyces bikiniensis.